The primary structure comprises 196 residues: Gastrula zinc finger protein XlCGF64.1 (196 aa).

C2H2-type zinc fingers lie at residues 6–28 (YECP…QRGH), 34–56 (FMCT…QFIH), 62–84 (YVCT…QRGH), 90–112 (FTCT…QFIH), 118–140 (YECT…QRGH), 146–168 (FMCT…QFIH), and 174–196 (LMCT…KLSH).

This sequence belongs to the krueppel C2H2-type zinc-finger protein family.

The protein localises to the nucleus. Functionally, may be involved in transcriptional regulation. In Xenopus laevis (African clawed frog), this protein is Gastrula zinc finger protein XlCGF64.1.